We begin with the raw amino-acid sequence, 158 residues long: Cyclic pyranopterin monophosphate synthase (158 aa).

Residues 75–77 (LCH) and 113–114 (ME) contribute to the substrate site. Residue D128 is part of the active site.

Belongs to the MoaC family. As to quaternary structure, homohexamer; trimer of dimers.

The enzyme catalyses (8S)-3',8-cyclo-7,8-dihydroguanosine 5'-triphosphate = cyclic pyranopterin phosphate + diphosphate. Its pathway is cofactor biosynthesis; molybdopterin biosynthesis. Its function is as follows. Catalyzes the conversion of (8S)-3',8-cyclo-7,8-dihydroguanosine 5'-triphosphate to cyclic pyranopterin monophosphate (cPMP). In Mannheimia succiniciproducens (strain KCTC 0769BP / MBEL55E), this protein is Cyclic pyranopterin monophosphate synthase.